Consider the following 152-residue polypeptide: Alpha-amylase inhibitor BDAI-1 (152 aa).

A signal peptide spans 1–30; sequence MGAMWMKSMLLVLLLCMLMVTPMTGARSDN.

Belongs to the protease inhibitor I6 (cereal trypsin/alpha-amylase inhibitor) family. Homodimer. Five disulfide bonds, which are essential for the inhibitor activity, are probably present. Endosperm.

It localises to the secreted. Functionally, could be involved in insect defense mechanisms. Inhibits insect-type alpha-amylase. The chain is Alpha-amylase inhibitor BDAI-1 (IAD1) from Hordeum vulgare (Barley).